A 638-amino-acid chain; its full sequence is 3D-(3,5/4)-trihydroxycyclohexane-1,2-dione hydrolase (638 aa).

Residue Glu-67 coordinates thiamine diphosphate. Residues 442 to 523 are thiamine pyrophosphate binding; sequence SLPGDLQRLW…INIMLFDNSG (82 aa). Mg(2+)-binding residues include Asp-494 and Asn-521.

The protein belongs to the TPP enzyme family. Mg(2+) is required as a cofactor. Thiamine diphosphate serves as cofactor.

The enzyme catalyses 3D-3,5/4-trihydroxycyclohexane-1,2-dione + H2O = 5-deoxy-D-glucuronate + H(+). It functions in the pathway polyol metabolism; myo-inositol degradation into acetyl-CoA; acetyl-CoA from myo-inositol: step 3/7. Functionally, involved in the cleavage of the C1-C2 bond of 3D-(3,5/4)-trihydroxycyclohexane-1,2-dione (THcHDO) to yield 5-deoxy-glucuronate (5DG). The polypeptide is 3D-(3,5/4)-trihydroxycyclohexane-1,2-dione hydrolase (Listeria monocytogenes serovar 1/2a (strain ATCC BAA-679 / EGD-e)).